Consider the following 430-residue polypeptide: CinA-like protein (430 aa).

Belongs to the CinA family.

This Prochlorococcus marinus (strain NATL1A) protein is CinA-like protein.